A 199-amino-acid chain; its full sequence is NAD(P)H dehydrogenase (quinone) (199 aa).

Residues 4 to 190 (VLVLYYSAYG…AGARYQGRVI (187 aa)) enclose the Flavodoxin-like domain. FMN-binding positions include 10–15 (SAYGHI) and 78–80 (TRF). Tyr12 is an NAD(+) binding site. Residue Trp98 participates in substrate binding. Residues 113–119 (STATQHG) and His134 each bind FMN.

It belongs to the WrbA family. It depends on FMN as a cofactor.

It catalyses the reaction a quinone + NADH + H(+) = a quinol + NAD(+). It carries out the reaction a quinone + NADPH + H(+) = a quinol + NADP(+). This Bradyrhizobium sp. (strain ORS 278) protein is NAD(P)H dehydrogenase (quinone).